Consider the following 79-residue polypeptide: Small ribosomal subunit protein bS18 (79 aa).

Belongs to the bacterial ribosomal protein bS18 family. In terms of assembly, part of the 30S ribosomal subunit. Forms a tight heterodimer with protein bS6.

Binds as a heterodimer with protein bS6 to the central domain of the 16S rRNA, where it helps stabilize the platform of the 30S subunit. This Blochmanniella pennsylvanica (strain BPEN) protein is Small ribosomal subunit protein bS18.